A 518-amino-acid polypeptide reads, in one-letter code: Dihydro-ML-236C monooxygenase mlcC (518 aa).

At 1–31 (MLGQVLLTVESYQWVSTPQALVAVAVLLSLI) the chain is on the cytoplasmic side. A helical; Signal-anchor for type II membrane protein transmembrane segment spans residues 32–48 (AYRLRGRQSELQVYNPK). Residues 49-518 (KWWELTTMRA…EDIPLPHDRC (470 aa)) lie on the Lumenal side of the membrane. A heme-binding site is contributed by C454.

This sequence belongs to the cytochrome P450 family. The cofactor is heme.

The protein resides in the endoplasmic reticulum membrane. It catalyses the reaction dihydro-ML-236C carboxylate + reduced [NADPH--hemoprotein reductase] + O2 = ML-236C carboxylate + oxidized [NADPH--hemoprotein reductase] + 2 H2O + H(+). It carries out the reaction ML-236C carboxylate + reduced [NADPH--hemoprotein reductase] + O2 = ML-236A carboxylate + oxidized [NADPH--hemoprotein reductase] + H2O + H(+). It participates in polyketide biosynthesis. Its function is as follows. Dihydro-ML-236C carboxylate monooxygenase; part of the gene cluster that mediates the biosynthesis of compactin, also known as mevastatin or ML-236B, and which acts as a potent competitive inhibitor of HMG-CoA reductase. Compactin biosynthesis is performed in two stages. The first stage is catalyzed by the nonaketide synthase mlcA, which belongs to type I polyketide synthases and catalyzes the iterative nine-step formation of the polyketide. This PKS stage is completed by the action of dehydrogenase mlcG, which catalyzes the NADPH-dependent reduction of the unsaturated tetra-, penta- and heptaketide intermediates that arise during the mlcA-mediated biosynthesis of the nonaketide chain and leads to dihydro-ML-236C carboxylate. Covalently bound dihydro-ML-236C carboxylate is released from mlcA by the mlcF esterase. Conversion of dihydro-ML-236C carboxylate into ML-236A carboxylate is subsequently performed with the participation of molecular oxygen and P450 monoogygenase mlcC. Finally, mlcH performs the conversion of ML-236A carboxylate to ML-236B/compactin carboxylate through the addition of the side-chain diketide moiety produced by the diketide synthase mlcB. The polypeptide is Dihydro-ML-236C monooxygenase mlcC (Penicillium citrinum).